A 251-amino-acid chain; its full sequence is CDP-diacylglycerol pyrophosphatase (251 aa).

The helical transmembrane segment at 4–24 (AGLLFLVMIVIAVVAAGIGYW) threads the bilayer.

This sequence belongs to the Cdh family.

The protein resides in the cell inner membrane. It carries out the reaction a CDP-1,2-diacyl-sn-glycerol + H2O = a 1,2-diacyl-sn-glycero-3-phosphate + CMP + 2 H(+). Its pathway is phospholipid metabolism; CDP-diacylglycerol degradation; phosphatidate from CDP-diacylglycerol: step 1/1. The sequence is that of CDP-diacylglycerol pyrophosphatase from Escherichia coli (strain ATCC 8739 / DSM 1576 / NBRC 3972 / NCIMB 8545 / WDCM 00012 / Crooks).